A 258-amino-acid polypeptide reads, in one-letter code: Nuclear egress protein 2 (258 aa).

Residues 1-228 (MLKEKMYDEL…TVPIFARRNN (228 aa)) lie on the Perinuclear space side of the membrane. The helical transmembrane segment at 229 to 249 (ILCGFLVAALLIVCYVIFKEF) threads the bilayer. Residues 250–258 (ALSADFSAV) are Nuclear-facing.

The protein belongs to the herpesviridae NEC2 protein family. As to quaternary structure, forms a heterohexameric complex with NEC1. Post-translationally, phosphorylated.

The protein resides in the host nucleus inner membrane. In terms of biological role, plays an essential role in virion nuclear egress, the first step of virion release from infected cell. Within the host nucleus, NEC1 interacts with the newly formed capsid through the vertexes and directs it to the inner nuclear membrane by associating with NEC2. Induces the budding of the capsid at the inner nuclear membrane as well as its envelopment into the perinuclear space. There, the NEC1/NEC2 complex promotes the fusion of the enveloped capsid with the outer nuclear membrane and the subsequent release of the viral capsid into the cytoplasm where it will reach the secondary budding sites in the host Golgi or trans-Golgi network. The sequence is that of Nuclear egress protein 2 from Homo sapiens (Human).